The following is a 425-amino-acid chain: Pleckstrin homology domain-containing family A member 2 (425 aa).

Positions 7-113 (QNRICGFLDI…WVEALNQASK (107 aa)) constitute a PH 1 domain. Lysine 141 is covalently cross-linked (Glycyl lysine isopeptide (Lys-Gly) (interchain with G-Cter in SUMO2)). Residue serine 184 is modified to Phosphoserine. The PH 2 domain occupies 198–298 (PLIKSGYCVK…WIKEIGAAVQ (101 aa)). Residues 312–330 (SISLTRPGSSSLSSGPNSI) are compositionally biased toward low complexity. Residues 312–332 (SISLTRPGSSSLSSGPNSILC) are disordered. Phosphoserine occurs at positions 314 and 349. Positions 352–425 (SSWQPWTPVP…DDENIRTSDV (74 aa)) are disordered. Residues 400–410 (RSEPQHPKEKP) show a composition bias toward basic and acidic residues.

Binds MPDZ and PTPN13. Highly expressed in heart, kidney, spleen and peripheral blood leukocytes. Detected at lower levels in brain, skeletal muscle, colon, thymus, liver, small intestine, placenta and lung.

The protein resides in the cytoplasm. Its subcellular location is the cell membrane. The protein localises to the nucleus. Functionally, binds specifically to phosphatidylinositol 3,4-diphosphate (PtdIns3,4P2), but not to other phosphoinositides. May recruit other proteins to the plasma membrane. This chain is Pleckstrin homology domain-containing family A member 2 (PLEKHA2), found in Homo sapiens (Human).